We begin with the raw amino-acid sequence, 249 residues long: Large ribosomal subunit protein uL16m (249 aa).

It belongs to the universal ribosomal protein uL16 family. In terms of assembly, component of the mitochondrial large ribosomal subunit (mt-LSU). Mature N.crassa 74S mitochondrial ribosomes consist of a small (37S) and a large (54S) subunit. The 37S small subunit contains a 16S ribosomal RNA (16S mt-rRNA) and 32 different proteins. The 54S large subunit contains a 23S rRNA (23S mt-rRNA) and 42 different proteins.

It localises to the mitochondrion. Functionally, component of the mitochondrial ribosome (mitoribosome), a dedicated translation machinery responsible for the synthesis of mitochondrial genome-encoded proteins, including at least some of the essential transmembrane subunits of the mitochondrial respiratory chain. The mitoribosomes are attached to the mitochondrial inner membrane and translation products are cotranslationally integrated into the membrane. In Neurospora crassa (strain ATCC 24698 / 74-OR23-1A / CBS 708.71 / DSM 1257 / FGSC 987), this protein is Large ribosomal subunit protein uL16m (mrpl16).